Consider the following 315-residue polypeptide: Methenyltetrahydromethanopterin cyclohydrolase (315 aa).

It belongs to the MCH family.

The protein localises to the cytoplasm. The catalysed reaction is 5,10-methenyl-5,6,7,8-tetrahydromethanopterin + H2O = N(5)-formyl-5,6,7,8-tetrahydromethanopterin + H(+). Its pathway is one-carbon metabolism; methanogenesis from CO(2); 5,10-methenyl-5,6,7,8-tetrahydromethanopterin from CO(2): step 3/3. In terms of biological role, catalyzes the reversible interconversion of 5-formyl-H(4)MPT to methenyl-H(4)MPT(+). The protein is Methenyltetrahydromethanopterin cyclohydrolase of Methanoculleus marisnigri (strain ATCC 35101 / DSM 1498 / JR1).